A 589-amino-acid polypeptide reads, in one-letter code: Probable translation initiation factor IF-2 (589 aa).

One can recognise a tr-type G domain in the interval 14–231 (LRQPIVCVLG…GLAQRFLESE (218 aa)). Positions 23-30 (GHVDHGKT) are G1. GTP is bound at residue 23 to 30 (GHVDHGKT). Positions 48-52 (GITQR) are G2. The segment at 84–87 (DTPG) is G3. Residues 84-88 (DTPGH) and 138-141 (NKID) each bind GTP. The interval 138–141 (NKID) is G4. The segment at 206–208 (SAK) is G5.

This sequence belongs to the TRAFAC class translation factor GTPase superfamily. Classic translation factor GTPase family. IF-2 subfamily.

In terms of biological role, function in general translation initiation by promoting the binding of the formylmethionine-tRNA to ribosomes. Seems to function along with eIF-2. The protein is Probable translation initiation factor IF-2 of Thermoplasma volcanium (strain ATCC 51530 / DSM 4299 / JCM 9571 / NBRC 15438 / GSS1).